The chain runs to 207 residues: Small heat shock protein hspG7 (207 aa).

Positions 30–207 (KTIIDILPPM…YSNTIKININ (178 aa)) constitute a sHSP domain. Composition is skewed to low complexity over residues 84 to 101 (QQQQLVIEKSSTSPSSST) and 122 to 135 (STTSTTTVSTATTT). Residues 84-149 (QQQQLVIEKS…EDENKTKSSD (66 aa)) form a disordered region. The span at 136–149 (KENKEDENKTKSSD) shows a compositional bias: basic and acidic residues.

The protein belongs to the small heat shock protein (HSP20) family.

This is Small heat shock protein hspG7 (hspG7) from Dictyostelium discoideum (Social amoeba).